Consider the following 578-residue polypeptide: MGHPTSFGQPSCLVWLAAAFLVLGLCLVQQGAGRQRPHQWKSSEAALSVSPAGDIVDKYSRDSTEGENTVSEGEAEGSRGGSWLEQEGVELRSPSQDSQTGTSTASPTGFRRLLRRLRFWRRGSTRGSDDAAEVSRRTRVPLHTRLLQHLRRVARIIRHGVSAAAGRLFGRVRQVEAERPQPVFTEGDPPDLETNSLYYRDKVPGQGIIQEILRQKPGIAHHPESFSVVAADERVSRTLWAEGGVVRVASELGQPGRVLVRGRRIGLFRPGMQFEATDQATGEPMTALVGHTVLEATARDVDSMRNEGLAVGLFQKVKNPYLANRYLRFLAPFDLVTIPGKPLVQKAKSRNEVGWVKNLLFLLPPTHVDMETFVDEIGRFPQEDRPLADAARLYLTVQAVRLVAHLQDEGVVHGKIMPDSFCLKREGGLYLRDFGSLVRAGAKVVVPAEYDEYTPPEGRAAARSRFGSGATTMTYAFDAWTLGSVIFLIWCSRAPDTKSGYEYSVEFFFSRCRRVPENVKLLVYKLINPSVEARLLALQAIETPEYREMEEQLSAASRLYSGDGTLTGGDDDMPPLET.

The N-terminal stretch at 1–33 is a signal peptide; that stretch reads MGHPTSFGQPSCLVWLAAAFLVLGLCLVQQGAG. A disordered region spans residues 56–82; it reads VDKYSRDSTEGENTVSEGEAEGSRGGS. Residues 259-546 form the Protein kinase domain; sequence LVRGRRIGLF…ALQAIETPEY (288 aa). The disordered stretch occupies residues 559 to 578; the sequence is LYSGDGTLTGGDDDMPPLET. Positions 569–578 are enriched in acidic residues; sequence GDDDMPPLET.

In terms of processing, phosphorylated on multiple serine and threonine residues in parasitic extracts and infected cells but not in extracellular parasites.

It localises to the secreted. The protein localises to the parasitophorous vacuole membrane. In terms of biological role, thought to play a role in parasitophorous vacuole membrane function during the infection of host organisms. The chain is Rhoptry protein 4 from Toxoplasma gondii.